The chain runs to 54 residues: Large ribosomal subunit protein bL33C (54 aa).

This sequence belongs to the bacterial ribosomal protein bL33 family.

The protein is Large ribosomal subunit protein bL33C of Streptomyces griseus subsp. griseus (strain JCM 4626 / CBS 651.72 / NBRC 13350 / KCC S-0626 / ISP 5235).